The primary structure comprises 132 residues: uncharacterized protein (132 aa).

Residues 66–86 traverse the membrane as a helical segment; sequence LPPMLLVLAALFVKGLIPLVL.

The protein resides in the membrane. This is an uncharacterized protein from Saccharomyces cerevisiae (strain ATCC 204508 / S288c) (Baker's yeast).